The sequence spans 627 residues: Zinc finger protein 256 (627 aa).

Residues 14-96 (VTFEDVAVYF…QKTNPCEICG (83 aa)) enclose the KRAB domain. The interval 55–76 (GSGAGDEEAPYQQSTSPQRVSQ) is disordered. Polar residues predominate over residues 65-75 (YQQSTSPQRVS). 15 consecutive C2H2-type zinc fingers follow at residues 90-112 (NPCE…QGTH), 239-261 (YMCS…LRVH), 267-289 (YTCG…RRIH), 295-317 (HQCD…QRVH), 323-345 (YKCS…QRIH), 351-373 (YECS…QRVH), 379-401 (YMCS…RRLH), 407-429 (YECS…QRVH), 435-457 (HECH…ERVH), 463-485 (YECS…WKVH), 491-513 (YECG…QRVH), 519-541 (YECN…RRSH), 547-569 (YECS…RRVH), 575-597 (YECS…QRIH), and 603-625 (YECS…QNVH).

Belongs to the krueppel C2H2-type zinc-finger protein family. In terms of assembly, interacts with TRIM28.

It localises to the nucleus. Its function is as follows. Transcriptional repressor that plays a role in cell proliferation. Requires TRIM28 for its activity. This is Zinc finger protein 256 (ZNF256) from Homo sapiens (Human).